A 323-amino-acid chain; its full sequence is Acetyl-coenzyme A carboxylase carboxyl transferase subunit alpha (323 aa).

Positions 39–293 (RLSKKSQQLT…RRALADSLRQ (255 aa)) constitute a CoA carboxyltransferase C-terminal domain.

It belongs to the AccA family. As to quaternary structure, acetyl-CoA carboxylase is a heterohexamer composed of biotin carboxyl carrier protein (AccB), biotin carboxylase (AccC) and two subunits each of ACCase subunit alpha (AccA) and ACCase subunit beta (AccD).

It is found in the cytoplasm. It carries out the reaction N(6)-carboxybiotinyl-L-lysyl-[protein] + acetyl-CoA = N(6)-biotinyl-L-lysyl-[protein] + malonyl-CoA. The protein operates within lipid metabolism; malonyl-CoA biosynthesis; malonyl-CoA from acetyl-CoA: step 1/1. In terms of biological role, component of the acetyl coenzyme A carboxylase (ACC) complex. First, biotin carboxylase catalyzes the carboxylation of biotin on its carrier protein (BCCP) and then the CO(2) group is transferred by the carboxyltransferase to acetyl-CoA to form malonyl-CoA. This is Acetyl-coenzyme A carboxylase carboxyl transferase subunit alpha from Paraburkholderia phymatum (strain DSM 17167 / CIP 108236 / LMG 21445 / STM815) (Burkholderia phymatum).